Consider the following 369-residue polypeptide: UDP-N-acetylglucosamine--N-acetylmuramyl-(pentapeptide) pyrophosphoryl-undecaprenol N-acetylglucosamine transferase (369 aa).

UDP-N-acetyl-alpha-D-glucosamine contacts are provided by residues 10–12, asparagine 124, arginine 166, serine 196, and glutamine 300; that span reads TGG.

The protein belongs to the glycosyltransferase 28 family. MurG subfamily.

It localises to the cell membrane. The enzyme catalyses di-trans,octa-cis-undecaprenyl diphospho-N-acetyl-alpha-D-muramoyl-L-alanyl-D-glutamyl-meso-2,6-diaminopimeloyl-D-alanyl-D-alanine + UDP-N-acetyl-alpha-D-glucosamine = di-trans,octa-cis-undecaprenyl diphospho-[N-acetyl-alpha-D-glucosaminyl-(1-&gt;4)]-N-acetyl-alpha-D-muramoyl-L-alanyl-D-glutamyl-meso-2,6-diaminopimeloyl-D-alanyl-D-alanine + UDP + H(+). It participates in cell wall biogenesis; peptidoglycan biosynthesis. In terms of biological role, cell wall formation. Catalyzes the transfer of a GlcNAc subunit on undecaprenyl-pyrophosphoryl-MurNAc-pentapeptide (lipid intermediate I) to form undecaprenyl-pyrophosphoryl-MurNAc-(pentapeptide)GlcNAc (lipid intermediate II). This chain is UDP-N-acetylglucosamine--N-acetylmuramyl-(pentapeptide) pyrophosphoryl-undecaprenol N-acetylglucosamine transferase, found in Desulfitobacterium hafniense (strain Y51).